Reading from the N-terminus, the 115-residue chain is uncharacterized protein (115 aa).

This is an uncharacterized protein from Homo sapiens (Human).